We begin with the raw amino-acid sequence, 538 residues long: Chaperonin GroEL (538 aa).

ATP is bound by residues 29–32 (TLGP), 86–90 (DGTTT), Gly-413, 479–481 (DAL), and Asp-495.

It belongs to the chaperonin (HSP60) family. As to quaternary structure, forms a cylinder of 14 subunits composed of two heptameric rings stacked back-to-back. Interacts with the co-chaperonin GroES.

It is found in the cytoplasm. The enzyme catalyses ATP + H2O + a folded polypeptide = ADP + phosphate + an unfolded polypeptide.. Its function is as follows. Together with its co-chaperonin GroES, plays an essential role in assisting protein folding. The GroEL-GroES system forms a nano-cage that allows encapsulation of the non-native substrate proteins and provides a physical environment optimized to promote and accelerate protein folding. This Thermotoga maritima (strain ATCC 43589 / DSM 3109 / JCM 10099 / NBRC 100826 / MSB8) protein is Chaperonin GroEL.